The sequence spans 223 residues: Cytidylate kinase (223 aa).

Position 12–20 (12–20) interacts with ATP; that stretch reads GPSGVGKGT.

It belongs to the cytidylate kinase family. Type 1 subfamily.

The protein resides in the cytoplasm. It carries out the reaction CMP + ATP = CDP + ADP. The catalysed reaction is dCMP + ATP = dCDP + ADP. The chain is Cytidylate kinase from Xylella fastidiosa (strain M23).